The chain runs to 208 residues: UPF0316 protein SERP1448 (208 aa).

3 helical membrane passes run 8-28 (PWLMVLAIFIINVCYVTFLTM), 40-60 (VAAVVSFMEVLVYVVGLGLVM), and 66-86 (IQNIFAYALGFSVGIIVGMKI).

The protein belongs to the UPF0316 family.

The protein resides in the cell membrane. The chain is UPF0316 protein SERP1448 from Staphylococcus epidermidis (strain ATCC 35984 / DSM 28319 / BCRC 17069 / CCUG 31568 / BM 3577 / RP62A).